The chain runs to 320 residues: Cytochrome f (320 aa).

The N-terminal stretch at 1–35 (MQTRKTFSWIKEQINRSISVSLMIYIITRPSISIA) is a signal peptide. Heme-binding residues include tyrosine 36, cysteine 56, cysteine 59, and histidine 60. The helical transmembrane segment at 286–306 (VQGLLFFLASVILAQIFLVLK) threads the bilayer.

The protein belongs to the cytochrome f family. As to quaternary structure, the 4 large subunits of the cytochrome b6-f complex are cytochrome b6, subunit IV (17 kDa polypeptide, petD), cytochrome f and the Rieske protein, while the 4 small subunits are PetG, PetL, PetM and PetN. The complex functions as a dimer. The cofactor is heme.

The protein localises to the plastid. The protein resides in the chloroplast thylakoid membrane. Component of the cytochrome b6-f complex, which mediates electron transfer between photosystem II (PSII) and photosystem I (PSI), cyclic electron flow around PSI, and state transitions. This chain is Cytochrome f, found in Daucus carota (Wild carrot).